We begin with the raw amino-acid sequence, 363 residues long: MSTQPSDSAEPGAAPAAVSTYAGVENTPTVPGSEPDAAKHAEEEPKVVNPTEPQPTAPVDNEPKPAAAPAQEADSPADIKDSVSTTAGELSPLAQLWKAAEGHAHFEIWGVPLSDPERHIPTQIIFQKFLNANEGQVEKAKDQLLKTLDWRQKTQPQQLLRKMFSKAKFDGLGYVTTYTAGDEPAVDEPEQKEVFTWNLYGSVKSLDETFGNLQEFVEWRVALMELGLMEINIGGAIKPITADYDPYKMTQVHDYKGISFLRQTDVAKAASKECIKVLGDNYPELLKEKFFLNIPAIMGFFYGLMKMFVSKKTLNKFHPMSSGTNLAKEFVNTKVDGLGDKLPAEYGGKGADLKTLGKAPIVT.

A disordered region spans residues 1-84 (MSTQPSDSAE…SPADIKDSVS (84 aa)). Basic and acidic residues predominate over residues 36 to 46 (DAAKHAEEEPK). Residues 64 to 76 (KPAAAPAQEADSP) are compositionally biased toward low complexity. The CRAL-TRIO domain occupies 180-354 (AGDEPAVDEP…EYGGKGADLK (175 aa)). Residues Tyr-200, Arg-220, His-253, Tyr-255, and Lys-289 each contribute to the heme site.

It belongs to the SFH5 family. Heme b is required as a cofactor.

The protein localises to the cytoplasm. Its subcellular location is the endoplasmic reticulum membrane. The protein resides in the microsome membrane. It catalyses the reaction a 1,2-diacyl-sn-glycero-3-phospho-(1D-myo-inositol)(in) = a 1,2-diacyl-sn-glycero-3-phospho-(1D-myo-inositol)(out). Functionally, non-classical phosphatidylinositol (PtdIns) transfer protein (PITP), which exhibits PtdIns-binding/transfer activity in the absence of detectable PtdCho-binding/transfer activity. Regulates PtdIns(4,5)P2 homeostasis at the plasma membrane. Heme-binding protein that may play a role in organic oxidant-induced stress responses. This is Phosphatidylinositol transfer protein sfh-5 (sfh-5) from Neurospora crassa (strain ATCC 24698 / 74-OR23-1A / CBS 708.71 / DSM 1257 / FGSC 987).